Consider the following 328-residue polypeptide: Cytochrome c biogenesis protein CcsA (328 aa).

8 consecutive transmembrane segments (helical) span residues 13–33 (ISFS…LVNL), 46–66 (GIVI…IYSG), 73–93 (LYES…VSYF), 101–121 (LNAI…SGLL), 146–166 (MILG…LLVI), 234–254 (IISL…VWAN), 263–283 (WDPK…YLHI), and 295–315 (AIVA…VNLL).

This sequence belongs to the CcmF/CycK/Ccl1/NrfE/CcsA family. In terms of assembly, may interact with Ccs1.

Its subcellular location is the plastid. The protein resides in the chloroplast thylakoid membrane. Its function is as follows. Required during biogenesis of c-type cytochromes (cytochrome c6 and cytochrome f) at the step of heme attachment. The chain is Cytochrome c biogenesis protein CcsA from Barbarea verna (Land cress).